A 276-amino-acid polypeptide reads, in one-letter code: Kallikrein-10 (276 aa).

A signal peptide spans 1–30; it reads MRAPHLHLSAASGARALAKLLPLLMAQLWA. The N-linked (GlcNAc...) asparagine glycan is linked to N39. One can recognise a Peptidase S1 domain in the interval 47-274; sequence AYGSPCARGS…YMSWINKVIR (228 aa). Cystine bridges form between C52–C162, C71–C87, C169–C235, C201–C215, and C225–C250. Active-site charge relay system residues include H86 and D137. S229 acts as the Charge relay system in catalysis.

It belongs to the peptidase S1 family. Kallikrein subfamily. In terms of tissue distribution, expressed in breast, ovary and prostate.

The protein resides in the secreted. In terms of biological role, has a tumor-suppressor role for NES1 in breast and prostate cancer. In Homo sapiens (Human), this protein is Kallikrein-10 (KLK10).